We begin with the raw amino-acid sequence, 554 residues long: Glutamine--tRNA ligase (554 aa).

A 'HIGH' region motif is present at residues 34–44 (PEPNGYLHIGH). ATP contacts are provided by residues 35-37 (EPN) and 41-47 (HIGHAKS). Positions 67 and 212 each coordinate L-glutamine. ATP-binding positions include Thr-231, 261 to 262 (RL), and 269 to 271 (MSK). A 'KMSKS' region motif is present at residues 268 to 272 (VMSKR). The interaction with tRNA stretch occupies residues 317 to 324 (TKQDNTIE).

It belongs to the class-I aminoacyl-tRNA synthetase family. As to quaternary structure, monomer.

It is found in the cytoplasm. The catalysed reaction is tRNA(Gln) + L-glutamine + ATP = L-glutaminyl-tRNA(Gln) + AMP + diphosphate. This Escherichia coli O7:K1 (strain IAI39 / ExPEC) protein is Glutamine--tRNA ligase.